The sequence spans 359 residues: Outer membrane protein assembly factor BamC (359 aa).

The first 34 residues, 1–34 (MASLFDKNSFQMTRLQKTAVAKVVGVSLIMLLAA), serve as a signal peptide directing secretion. Cysteine 35 carries N-palmitoyl cysteine lipidation. Cysteine 35 is lipidated: S-diacylglycerol cysteine.

The protein belongs to the BamC family. In terms of assembly, part of the Bam complex, which is composed of the outer membrane protein BamA, and four lipoproteins BamB, BamC, BamD and BamE.

It is found in the cell outer membrane. Part of the outer membrane protein assembly complex, which is involved in assembly and insertion of beta-barrel proteins into the outer membrane. The sequence is that of Outer membrane protein assembly factor BamC from Rahnella sp. (strain Y9602).